A 378-amino-acid chain; its full sequence is Aminotransferase apf4 (378 aa).

Residue Arg88 participates in pyridoxal 5'-phosphate binding. Lys189 bears the N6-(pyridoxal phosphate)lysine mark. Residue Glu228 participates in pyridoxal 5'-phosphate binding. Residues 359 to 378 (ERGHNGQPTADPTRVIEMPE) are disordered.

This sequence belongs to the class-IV pyridoxal-phosphate-dependent aminotransferase family. The cofactor is pyridoxal 5'-phosphate.

Its pathway is secondary metabolite biosynthesis. Aminotransferase; part of the gene cluster that mediates the biosynthesis of the cyclic tetrapeptide apicidin F (APF). The non-ribosomal peptide synthetase apf1 incorporates four different amino acids to produce apicidin F: L-phenylalanine, D-pipecolic acid (D-pip), N-methoxy-L-tryptophan and L-2-aminooctanedioic acid. L-Phenylalanine is the only proteinogenic amino acid directly used by apf1. The 3 other apf1 substrates are non-proteinogenic and have to be modified by other enzymes of the cluster. Lysine is converted to delta-1-pyrroline-5-carboxylate (P5C) which is reduced to L-pipecolic acid (L-pip) by apf3. L-pip is epimerized to D-pip, probably by apf1 activity, prior to incorporation. L-Tryptophan is N-oxidyzed by one of the cytochrome P450 monooxygenases (apf7 or apf8), and further methylated at the hydroxy group by the O-methyltransferase apf6 to yield N-methoxy-L-tryptophan. The synthesis of the fourth apf1 substrate is more complex. The fatty acid synthase apf5 is involved in the synthesis of the octanoic acid backbone of L-2-aminooctanedioic acid by fixing one acetyl-CoA unit and three malonyl-CoA units. Then one of the cytochrome P450 monooxygenases (apf7 or apf8) may oxidize this backbone to 2-oxooctanoic acid. The aminotransferase apf4 is predicted to catalyze the exchange of the keto group with an amino group. The next step would be the oxidation of 2-aminooctanoic acid by one of the cytochrome P450 monooxygenases (apf7 or apf8). The last step is the oxidation of 2-amino-8-hydroxyoctanoic acid to 2-aminooctanedioic acid is catalyzed by the FAD-dependent monooxygenase apf9. The sequence is that of Aminotransferase apf4 from Gibberella fujikuroi (strain CBS 195.34 / IMI 58289 / NRRL A-6831) (Bakanae and foot rot disease fungus).